Reading from the N-terminus, the 313-residue chain is Peptidyl-prolyl cis-trans isomerase 9 (313 aa).

Positions 9-174 constitute a PPIase cyclophilin-type domain; it reads FLDMALDEKP…AKVRIFNSGE (166 aa). Composition is skewed to basic and acidic residues over residues 216–230 and 253–269; these read EERE…ESSR and RGDR…KDDF. Disordered stretches follow at residues 216–274 and 288–313; these read EERE…IAVR and TPEH…DLQP.

This sequence belongs to the cyclophilin-type PPIase family.

The catalysed reaction is [protein]-peptidylproline (omega=180) = [protein]-peptidylproline (omega=0). In terms of biological role, PPIases accelerate the folding of proteins. It catalyzes the cis-trans isomerization of proline imid ic peptide bonds in oligopeptides. Thought to function as a catalyst in the folding and modification of cuticle collagens. This chain is Peptidyl-prolyl cis-trans isomerase 9, found in Caenorhabditis briggsae.